We begin with the raw amino-acid sequence, 401 residues long: Probable tRNA sulfurtransferase (401 aa).

In terms of domain architecture, THUMP spans 60 to 165 (EEICSLLKNI…EEATFLTIRN (106 aa)). ATP-binding positions include 183–184 (ML), 208–209 (HF), Arg265, Gly287, and Gln296.

Belongs to the ThiI family.

It is found in the cytoplasm. It catalyses the reaction [ThiI sulfur-carrier protein]-S-sulfanyl-L-cysteine + a uridine in tRNA + 2 reduced [2Fe-2S]-[ferredoxin] + ATP + H(+) = [ThiI sulfur-carrier protein]-L-cysteine + a 4-thiouridine in tRNA + 2 oxidized [2Fe-2S]-[ferredoxin] + AMP + diphosphate. The enzyme catalyses [ThiS sulfur-carrier protein]-C-terminal Gly-Gly-AMP + S-sulfanyl-L-cysteinyl-[cysteine desulfurase] + AH2 = [ThiS sulfur-carrier protein]-C-terminal-Gly-aminoethanethioate + L-cysteinyl-[cysteine desulfurase] + A + AMP + 2 H(+). It functions in the pathway cofactor biosynthesis; thiamine diphosphate biosynthesis. Functionally, catalyzes the ATP-dependent transfer of a sulfur to tRNA to produce 4-thiouridine in position 8 of tRNAs, which functions as a near-UV photosensor. Also catalyzes the transfer of sulfur to the sulfur carrier protein ThiS, forming ThiS-thiocarboxylate. This is a step in the synthesis of thiazole, in the thiamine biosynthesis pathway. The sulfur is donated as persulfide by IscS. The sequence is that of Probable tRNA sulfurtransferase from Bacillus velezensis (strain DSM 23117 / BGSC 10A6 / LMG 26770 / FZB42) (Bacillus amyloliquefaciens subsp. plantarum).